Here is a 311-residue protein sequence, read N- to C-terminus: Malate dehydrogenase (311 aa).

NAD(+)-binding positions include 7–13 (GAAGGIG) and aspartate 34. Positions 81 and 87 each coordinate substrate. Residues asparagine 94 and 117-119 (ITN) each bind NAD(+). Residues asparagine 119 and arginine 153 each contribute to the substrate site. Catalysis depends on histidine 177, which acts as the Proton acceptor. Methionine 227 is a binding site for NAD(+).

It belongs to the LDH/MDH superfamily. MDH type 1 family. As to quaternary structure, homodimer.

It catalyses the reaction (S)-malate + NAD(+) = oxaloacetate + NADH + H(+). Functionally, catalyzes the reversible oxidation of malate to oxaloacetate. This chain is Malate dehydrogenase, found in Shewanella frigidimarina (strain NCIMB 400).